Consider the following 671-residue polypeptide: Replication protein A 70 kDa DNA-binding subunit (671 aa).

2 disordered regions span residues 143–166 (QVSQ…PAVN) and 190–219 (MNKT…LQIS). Low complexity predominate over residues 199–213 (NNNNNNNNNGNNKNN). The segment at residues 240–322 (QTIKVRITKK…NKGDHTVTVN (83 aa)) is a DNA-binding region (OB). The C4-type zinc-finger motif lies at 530–549 (CFSCKKKIARNNEVWTCINC).

It belongs to the replication factor A protein 1 family. Component of the replication protein A complex (RPA), a heterotrimeric complex composed of RPA1, RPA2/TEB2 and RPA3/TEB3.

As part of the heterotrimeric replication protein A (RPA) complex, binds and stabilizes single-stranded DNA intermediates, that form during DNA replication or upon DNA stress. It prevents their reannealing and in parallel, recruits and activates different proteins and complexes involved in DNA metabolism. Thereby, it plays an essential role both in DNA replication and the cellular response to DNA damage. In the cellular response to DNA damage, the RPA complex controls DNA repair and DNA damage checkpoint activation. The sequence is that of Replication protein A 70 kDa DNA-binding subunit from Tetrahymena thermophila (strain SB210).